Reading from the N-terminus, the 189-residue chain is Chitin synthase 1 (189 aa).

Belongs to the chitin synthase family. Class I subfamily.

It localises to the cell membrane. It carries out the reaction [(1-&gt;4)-N-acetyl-beta-D-glucosaminyl](n) + UDP-N-acetyl-alpha-D-glucosamine = [(1-&gt;4)-N-acetyl-beta-D-glucosaminyl](n+1) + UDP + H(+). Functionally, polymerizes chitin, a structural polymer of the cell wall and septum, by transferring the sugar moiety of UDP-GlcNAc to the non-reducing end of the growing chitin polymer. The polypeptide is Chitin synthase 1 (CHS1) (Exophiala jeanselmei (Dematiaceous fungus)).